An 863-amino-acid polypeptide reads, in one-letter code: Oleate activated transcription factor 3 (863 aa).

A DNA-binding region (zn(2)-C6 fungal-type) is located at residues 18–47 (VCTNCKKRKSKCDRTKPCGTCVRLGDVDSC). Over residues 52-63 (DSSGQPESSPSL) the composition is skewed to polar residues. A disordered region spans residues 52 to 99 (DSSGQPESSPSLNDADPLRKQSTPAERISPGFIKKRRSSQTRQDEDHW).

The protein belongs to the OAF3 family.

Its subcellular location is the cytoplasm. The protein resides in the nucleus. It localises to the mitochondrion. In terms of biological role, transcriptional inhibitor with a significantly increased number of target genes in response to oleate. This is Oleate activated transcription factor 3 (OAF3) from Saccharomyces cerevisiae (strain ATCC 204508 / S288c) (Baker's yeast).